The primary structure comprises 418 residues: AP-3 complex subunit mu-1 (418 aa).

An MHD domain is found at 176–417 (NNEAYFDVVE…VTKAGKFQVR (242 aa)).

The protein belongs to the adaptor complexes medium subunit family. In terms of assembly, adaptor protein complex 3 (AP-3) is a heterotetramer composed of two large adaptins (delta-type subunit AP3D1 and beta-type subunit AP3B1 or AP3B2), a medium adaptin (mu-type subunit AP3M1 or AP3M2) and a small adaptin (sigma-type subunit APS1 or AP3S2). Interacts with AGAP1. AP-3 associates with the BLOC-1 complex. (Microbial infection) Interacts with human respiratory virus (HRSV) matrix protein; this interaction plays an essential role in trafficking the matrix protein in host cells.

The protein localises to the golgi apparatus. Its subcellular location is the cytoplasmic vesicle membrane. In terms of biological role, part of the AP-3 complex, an adaptor-related complex which is not clathrin-associated. The complex is associated with the Golgi region as well as more peripheral structures. It facilitates the budding of vesicles from the Golgi membrane and may be directly involved in trafficking to lysosomes. In concert with the BLOC-1 complex, AP-3 is required to target cargos into vesicles assembled at cell bodies for delivery into neurites and nerve terminals. This chain is AP-3 complex subunit mu-1 (AP3M1), found in Homo sapiens (Human).